A 290-amino-acid chain; its full sequence is MDKIIKSIAQSGSFRAYVLDSTETVALAQEKHNTLSSSTVALGRTLIANQILAANQKGDSRITVKVIGDSSFGHIISVADTKGHVKGYIQNTGVDIKKTATGEVLVGPFMGNGHFVTIIDYGTGNPYTSTTPLITGEIGEDFAYYLTESEQTPSAIGLNVLLDENDKVKVAGGFMVQVLPGASEEEVARYEKRLQEMPAISHLLASKNHVDALLEAIYGDEPYKRLSEEPLSFQCDCSRERFEAALMTLPKADLQAMIDEDKGAEIVCQFCGTKYQFNESDLEAIINDKA.

Intrachain disulfides connect cysteine 235/cysteine 237 and cysteine 268/cysteine 271.

The protein belongs to the HSP33 family. Under oxidizing conditions two disulfide bonds are formed involving the reactive cysteines. Under reducing conditions zinc is bound to the reactive cysteines and the protein is inactive.

It is found in the cytoplasm. Functionally, redox regulated molecular chaperone. Protects both thermally unfolding and oxidatively damaged proteins from irreversible aggregation. Plays an important role in the bacterial defense system toward oxidative stress. In Streptococcus pyogenes serotype M12 (strain MGAS2096), this protein is 33 kDa chaperonin.